The primary structure comprises 154 residues: tRNA (cytidine(34)-2'-O)-methyltransferase (154 aa).

Residues Leu78, Gly100, Leu122, and Ser130 each contribute to the S-adenosyl-L-methionine site.

It belongs to the class IV-like SAM-binding methyltransferase superfamily. RNA methyltransferase TrmH family. TrmL subfamily. In terms of assembly, homodimer.

Its subcellular location is the cytoplasm. The catalysed reaction is cytidine(34) in tRNA + S-adenosyl-L-methionine = 2'-O-methylcytidine(34) in tRNA + S-adenosyl-L-homocysteine + H(+). The enzyme catalyses 5-carboxymethylaminomethyluridine(34) in tRNA(Leu) + S-adenosyl-L-methionine = 5-carboxymethylaminomethyl-2'-O-methyluridine(34) in tRNA(Leu) + S-adenosyl-L-homocysteine + H(+). Its function is as follows. Methylates the ribose at the nucleotide 34 wobble position in the two leucyl isoacceptors tRNA(Leu)(CmAA) and tRNA(Leu)(cmnm5UmAA). Catalyzes the methyl transfer from S-adenosyl-L-methionine to the 2'-OH of the wobble nucleotide. In Methylovorus glucosotrophus (strain SIP3-4), this protein is tRNA (cytidine(34)-2'-O)-methyltransferase.